The sequence spans 921 residues: Sodium/calcium exchanger 2 (921 aa).

Positions 1–20 (MAPLALMGVVLLLGVPHCLG) are cleaved as a signal peptide. The tract at residues 23–42 (TPTPSLPPPTANDSDASPEG) is disordered. Residues 69 to 89 (VARAVVYFVAMVYMFLGVSII) traverse the membrane as a helical segment. N-linked (GlcNAc...) asparagine glycans are attached at residues Asn-125 and Asn-130. The next 4 helical transmembrane spans lie at 131-151 (LTLM…IEVC), 165-185 (IVGS…YVIP), 197-217 (VFFV…LILA), and 226-246 (VWEA…AWMA). The interval 248–267 (KRLLFYKYVYKRYRTDPRSG) is putative calmodulin-binding region. The segment at 371–391 (HAADAARRPGATDGAPDDEDD) is disordered. Calx-beta domains are found at residues 389–482 (EDDG…FVRL) and 512–611 (ATVT…FIEL). Positions 407, 443, 468, 469, 471, 473, 476, 518, 519, 520, 536, 598, 599, and 600 each coordinate Ca(2+). Ser-622 bears the Phosphoserine mark. Ca(2+) is bound at residue Glu-665. 6 helical membrane-spanning segments follow: residues 721 to 741 (CFDY…ACVP), 749 to 769 (WACF…IGDL), 786 to 806 (VVFV…VAAL), 823 to 843 (AVNV…YWAV), 855 to 875 (LAFS…VLLY), and 893 to 913 (LATT…SSLE).

This sequence belongs to the Ca(2+):cation antiporter (CaCA) (TC 2.A.19) family. SLC8 subfamily. In terms of tissue distribution, detected in kidney cortex, in distal convoluted tubules and connecting segments. Detected in brain and spinal cord (at protein level). Detected in brain, especially in hippocampus CA1, CA2 and CA3 fiels, dentate gyrus, cerebellum and brain cortex.

Its subcellular location is the cell membrane. The protein resides in the basolateral cell membrane. It carries out the reaction Ca(2+)(in) + 3 Na(+)(out) = Ca(2+)(out) + 3 Na(+)(in). Its activity is regulated as follows. Calcium transport is down-regulated by Na(+) and stimulated by Ca(2+). Its function is as follows. Mediates the electrogenic exchange of Ca(2+) against Na(+) ions across the cell membrane, and thereby contributes to the regulation of cytoplasmic Ca(2+) levels and Ca(2+)-dependent cellular processes. Contributes to cellular Ca(2+) homeostasis in excitable cells. Contributes to the rapid decrease of cytoplasmic Ca(2+) levels back to baseline after neuronal activation, and thereby contributes to modulate synaptic plasticity, learning and memory. Plays a role in regulating urinary Ca(2+) and Na(+) excretion. In Mus musculus (Mouse), this protein is Sodium/calcium exchanger 2.